The following is a 463-amino-acid chain: Type II NADH:quinone oxidoreductase Ndh (463 aa).

FAD is bound by residues 21 to 25 (GSGFG) and Val89. Glu184 is an active-site residue. FAD is bound by residues Asp322 and 333-334 (AQ). The chain crosses the membrane as a helical span at residues 387 to 407 (FSGFIAWLIWLVLHLAYLIGF).

This sequence belongs to the NADH dehydrogenase family. The cofactor is FAD.

The protein resides in the cell inner membrane. The catalysed reaction is a quinone + NADH + H(+) = a quinol + NAD(+). The enzyme catalyses a menaquinone + NADH + H(+) = a menaquinol + NAD(+). It catalyses the reaction a ubiquinone + NADH + H(+) = a ubiquinol + NAD(+). With respect to regulation, inhibited by phenothiazine analogs. Inhibited by 2-mercapto-quinazolinones. Not inhibited by classic inhibitors of type I NADH dehydrogenase, such as rotenone, piericidin A and pyridaben. In terms of biological role, alternative, nonproton pumping NADH:quinone oxidoreductase that delivers electrons to the respiratory chain by oxidation of NADH and reduction of quinones. Ndh is probably the main NADH dehydrogenase of M.tuberculosis. The polypeptide is Type II NADH:quinone oxidoreductase Ndh (Mycobacterium tuberculosis (strain ATCC 25618 / H37Rv)).